Reading from the N-terminus, the 217-residue chain is Putative threonylcarbamoyl-AMP synthase (217 aa).

Positions 14–199 (SRGIVSAVGA…TPRVLRPGPV (186 aa)) constitute a YrdC-like domain.

It belongs to the SUA5 family.

Its subcellular location is the cytoplasm. It carries out the reaction L-threonine + hydrogencarbonate + ATP = L-threonylcarbamoyladenylate + diphosphate + H2O. Required for the formation of a threonylcarbamoyl group on adenosine at position 37 (t(6)A37) in tRNAs that read codons beginning with adenine. Catalyzes the conversion of L-threonine, HCO(3)(-)/CO(2) and ATP to give threonylcarbamoyl-AMP (TC-AMP) as the acyladenylate intermediate, with the release of diphosphate. In Mycobacterium tuberculosis (strain CDC 1551 / Oshkosh), this protein is Putative threonylcarbamoyl-AMP synthase.